Reading from the N-terminus, the 121-residue chain is UPF0295 protein ABC1323 (121 aa).

2 consecutive transmembrane segments (helical) span residues 14 to 34 (TFALSLVFVGILIMYVGIFFK) and 41 to 61 (VIAMILGFLAVIASTVVYFFI).

This sequence belongs to the UPF0295 family.

The protein localises to the cell membrane. The sequence is that of UPF0295 protein ABC1323 from Shouchella clausii (strain KSM-K16) (Alkalihalobacillus clausii).